The sequence spans 100 residues: EKC/KEOPS complex subunit GON7 (100 aa).

N-acetylmethionine is present on M1. A disordered region spans residues 61-100 (AAAPDEDLDGDDEDDAEDENNIDNRTNFDGPSAKRPKTPS). A compositionally biased stretch (acidic residues) spans 64–81 (PDEDLDGDDEDDAEDENN).

As to quaternary structure, component of the EKC/KEOPS complex composed of at least GON7, TP53RK, TPRKB, OSGEP and LAGE3; the whole complex dimerizes.

The protein localises to the nucleus. Functionally, component of the EKC/KEOPS complex that is required for the formation of a threonylcarbamoyl group on adenosine at position 37 (t(6)A37) in tRNAs that read codons beginning with adenine. The complex is probably involved in the transfer of the threonylcarbamoyl moiety of threonylcarbamoyl-AMP (TC-AMP) to the N6 group of A37. GON7 plays a supporting role to the catalytic subunit OSGEP in the complex. This Homo sapiens (Human) protein is EKC/KEOPS complex subunit GON7.